The chain runs to 445 residues: Anthranilate N-benzoyltransferase protein 3 (445 aa).

Active-site proton acceptor residues include His164 and Asp392.

The protein belongs to the plant acyltransferase family. In terms of processing, N-terminus is blocked.

The catalysed reaction is anthranilate + benzoyl-CoA = N-benzoylanthranilate + CoA. The protein operates within phytoalexin biosynthesis; methoxydianthramide B biosynthesis. Catalyzes the formation of N-benzoylanthranilate, in the course of methoxydianthramide B, a phytoalexin. Phytoalexins are produced in response to infection by parasites, and are essential for the expression of disease resistance. The sequence is that of Anthranilate N-benzoyltransferase protein 3 (HCBT3) from Dianthus caryophyllus (Carnation).